Here is a 352-residue protein sequence, read N- to C-terminus: Selenide, water dikinase (352 aa).

Cys23 is an active-site residue. Residues Lys26 and 54–56 (SRD) contribute to the ATP site. Asp57 is a binding site for Mg(2+). Residues Asp74, Asp97, and 145–147 (GHS) each bind ATP. Asp97 lines the Mg(2+) pocket. Position 233 (Asp233) interacts with Mg(2+).

This sequence belongs to the selenophosphate synthase 1 family. Class I subfamily. In terms of assembly, homodimer. Mg(2+) is required as a cofactor.

The catalysed reaction is hydrogenselenide + ATP + H2O = selenophosphate + AMP + phosphate + 2 H(+). In terms of biological role, synthesizes selenophosphate from selenide and ATP. In Shewanella baltica (strain OS155 / ATCC BAA-1091), this protein is Selenide, water dikinase.